The chain runs to 115 residues: Evasin P1182 (115 aa).

A signal peptide spans 1 to 26 (MALNWSFRVIFVSTMWCALLKFATLG). Cystine bridges form between cysteine 38-cysteine 58, cysteine 54-cysteine 94, cysteine 70-cysteine 99, and cysteine 89-cysteine 108. Residues asparagine 45, asparagine 72, and asparagine 103 are each glycosylated (N-linked (GlcNAc...) asparagine).

It is found in the secreted. In terms of biological role, salivary chemokine-binding protein which binds to host chemokines CCL2, CCL3, CCL4, CCL8 and CCL18. The sequence is that of Evasin P1182 from Amblyomma maculatum (Gulf Coast tick).